Reading from the N-terminus, the 388-residue chain is NADPH-dependent butanol dehydrogenase (388 aa).

It belongs to the iron-containing alcohol dehydrogenase family.

This enzyme has activity using butanol and ethanol as substrates. The polypeptide is NADPH-dependent butanol dehydrogenase (adh1) (Clostridium saccharobutylicum).